The chain runs to 138 residues: Phospholipase A2 homolog mojave toxin acidic chain (138 aa).

The signal sequence occupies residues 1–40 (MRALWIVAVLLVGVEGSLVEFETLIMKIAGRSGISYYSSY). Cystine bridges form between Cys-42–Cys-131, Cys-44–Cys-60, Cys-59–Cys-111, Cys-65–Cys-138, Cys-66–Cys-104, Cys-73–Cys-97, and Cys-91–Cys-102. Residues 81–83 (TYR) constitute a propeptide that is removed on maturation. The residue at position 84 (Gln-84) is a Pyrrolidone carboxylic acid. A propeptide spanning residues 120-126 (DYKYLRF) is cleaved from the precursor.

The protein belongs to the phospholipase A2 family. Group II subfamily. D49 sub-subfamily. Heterodimer of an acidic and a basic chain. The acidic subunit is non-toxic, without enzymatic activity and comprises 3 peptides that are cross-linked by 5 disulfide bridges. The basic subunit is toxic, has phospholipase A2 activity and is composed of a single chain. It depends on Ca(2+) as a cofactor. As to expression, expressed by the venom gland.

The protein resides in the secreted. Snake venom phospholipase A2 (PLA2) that inhibits neuromuscular transmission by blocking acetylcholine release from the nerve termini. In Crotalus scutulatus scutulatus (Mojave rattlesnake), this protein is Phospholipase A2 homolog mojave toxin acidic chain.